We begin with the raw amino-acid sequence, 137 residues long: Small ribosomal subunit protein bS6 (137 aa).

A disordered region spans residues 96 to 137; that stretch reads ITEASPMAKAKDERDTRRSSEERAPRAEATEEAEESAENTAE. Basic and acidic residues predominate over residues 104–124; sequence KAKDERDTRRSSEERAPRAEA. Positions 125–137 are enriched in acidic residues; it reads TEEAEESAENTAE.

This sequence belongs to the bacterial ribosomal protein bS6 family.

Its function is as follows. Binds together with bS18 to 16S ribosomal RNA. The chain is Small ribosomal subunit protein bS6 from Shewanella pealeana (strain ATCC 700345 / ANG-SQ1).